A 325-amino-acid chain; its full sequence is LIM and senescent cell antigen-like-containing domain protein 1 (325 aa).

Residue alanine 2 is modified to N-acetylalanine. 5 LIM zinc-binding domains span residues 10 to 62, 71 to 121, 135 to 184, 193 to 243, and 252 to 303; these read CERC…CEHD, CHQC…CRPC, CQKC…CLPC, CGAC…CETH, and CFHC…CKKC.

In terms of assembly, component of the heterotrimeric IPP (ILK-PINCH-PARVIN) complex composed of ILK, LIMS1/PINCH and PARVA; the complex binds to F-actin via the C-terminal tail of LIMS1 and the N-terminal region of PARVA, promoting F-actin filament bundling. Formation of the IPP complex is dependent on protein kinase C and precedes integrin-mediated cell adhesion and spreading. Competes with LIMS2 for interaction with ILK. Interacts (via LIM zinc-binding 5) with TGFB1I1. Interacts with SH3/SH2 adapter NCK2, thereby linking the complex to cell surface receptors. Expressed in most tissues except in the brain.

It is found in the cell junction. It localises to the focal adhesion. The protein localises to the cell membrane. Within the IPP (ILK-PINCH-PARVIN) complex, binds to F-actin, promoting F-actin bundling, a process required to generate force for actin cytoskeleton reorganization and subsequent dynamic cell adhesion events such as cell spreading and migration. The sequence is that of LIM and senescent cell antigen-like-containing domain protein 1 (LIMS1) from Homo sapiens (Human).